Reading from the N-terminus, the 320-residue chain is Ferrochelatase (320 aa).

Residues His-194 and Glu-275 each coordinate Fe cation.

Belongs to the ferrochelatase family. Monomer.

It localises to the cytoplasm. It catalyses the reaction heme b + 2 H(+) = protoporphyrin IX + Fe(2+). Its pathway is porphyrin-containing compound metabolism; protoheme biosynthesis; protoheme from protoporphyrin-IX: step 1/1. Its function is as follows. Catalyzes the ferrous insertion into protoporphyrin IX. This Shigella boydii serotype 4 (strain Sb227) protein is Ferrochelatase.